The sequence spans 150 residues: uncharacterized protein (150 aa).

The 62-residue stretch at 5-66 (LDKVDRRLLE…KPNYKKLNLG (62 aa)) folds into the HTH asnC-type domain. The segment at residues 24 to 43 (IATLSKKLGIPRTTVHYRIK) is a DNA-binding region (H-T-H motif).

This is an uncharacterized protein from Pyrococcus abyssi (strain GE5 / Orsay).